Here is a 417-residue protein sequence, read N- to C-terminus: Serine hydroxymethyltransferase (417 aa).

(6S)-5,6,7,8-tetrahydrofolate is bound by residues leucine 121 and 125-127 (GHL). At lysine 229 the chain carries N6-(pyridoxal phosphate)lysine. 355 to 357 (SPF) contributes to the (6S)-5,6,7,8-tetrahydrofolate binding site.

The protein belongs to the SHMT family. In terms of assembly, homodimer. The cofactor is pyridoxal 5'-phosphate.

Its subcellular location is the cytoplasm. The enzyme catalyses (6R)-5,10-methylene-5,6,7,8-tetrahydrofolate + glycine + H2O = (6S)-5,6,7,8-tetrahydrofolate + L-serine. It functions in the pathway one-carbon metabolism; tetrahydrofolate interconversion. The protein operates within amino-acid biosynthesis; glycine biosynthesis; glycine from L-serine: step 1/1. In terms of biological role, catalyzes the reversible interconversion of serine and glycine with tetrahydrofolate (THF) serving as the one-carbon carrier. This reaction serves as the major source of one-carbon groups required for the biosynthesis of purines, thymidylate, methionine, and other important biomolecules. Also exhibits THF-independent aldolase activity toward beta-hydroxyamino acids, producing glycine and aldehydes, via a retro-aldol mechanism. The chain is Serine hydroxymethyltransferase from Salmonella paratyphi C (strain RKS4594).